Consider the following 104-residue polypeptide: RLYYLRNGARISVSAASKLXSNMMYQYRGMGLSMGSMICGWDKKGPGLYYVDENGTRLSGNMFSTGSGNTYAYGVMDSGHRYDLSIEEAYDLGRRAIVHATHRD.

This sequence belongs to the peptidase T1B family. The 26S proteasome consists of a 20S proteasome core and two 19S regulatory subunits. The 20S proteasome core is composed of 28 subunits that are arranged in four stacked rings, resulting in a barrel-shaped structure. The two end rings are each formed by seven alpha subunits, and the two central rings are each formed by seven beta subunits. The catalytic chamber with the active sites is on the inside of the barrel. Component of the immunoproteasome, where it displaces the equivalent housekeeping subunit PSMB5. Component of the spermatoproteasome, a form of the proteasome specifically found in testis. Directly interacts with POMP.

The protein resides in the cytoplasm. It localises to the nucleus. It carries out the reaction Cleavage of peptide bonds with very broad specificity.. The proteasome is a multicatalytic proteinase complex which is characterized by its ability to cleave peptides with Arg, Phe, Tyr, Leu, and Glu adjacent to the leaving group at neutral or slightly basic pH. The proteasome has an ATP-dependent proteolytic activity. This subunit is involved in antigen processing to generate class I binding peptides. May participate in the generation of spliced peptides resulting from the ligation of two separate proteasomal cleavage products that are not contiguous in the parental protein. Required for adipocyte differentiation. The sequence is that of Proteasome subunit beta type-8 (PSMB8) from Sus scrofa (Pig).